The chain runs to 279 residues: Malonyl-[acyl-carrier protein] O-methyltransferase (279 aa).

Belongs to the methyltransferase superfamily.

The catalysed reaction is malonyl-[ACP] + S-adenosyl-L-methionine = malonyl-[ACP] methyl ester + S-adenosyl-L-homocysteine. Its pathway is cofactor biosynthesis; biotin biosynthesis. In terms of biological role, converts the free carboxyl group of a malonyl-thioester to its methyl ester by transfer of a methyl group from S-adenosyl-L-methionine (SAM). It allows to synthesize pimeloyl-ACP via the fatty acid synthetic pathway. The chain is Malonyl-[acyl-carrier protein] O-methyltransferase from Hahella chejuensis (strain KCTC 2396).